Reading from the N-terminus, the 429-residue chain is Protein AST1 (429 aa).

In terms of assembly, interacts with PMA1.

It localises to the cell membrane. It is found in the membrane raft. The protein resides in the golgi apparatus membrane. Its subcellular location is the late endosome membrane. Its function is as follows. Lipid raft-associated protein involved in the targeting of PMA1 from Golgi to the plasma membrane. May induce clustering of PMA1, which facilitates partition of PMA1 into lipid rafts after leaving the ER and its transport to the cell surface. In Saccharomyces cerevisiae (strain ATCC 204508 / S288c) (Baker's yeast), this protein is Protein AST1.